The primary structure comprises 130 residues: Small ribosomal subunit protein uS8B (130 aa).

This sequence belongs to the universal ribosomal protein uS8 family.

This Drosophila melanogaster (Fruit fly) protein is Small ribosomal subunit protein uS8B (RpS15Ab).